Consider the following 119-residue polypeptide: Large ribosomal subunit protein uL18 (119 aa).

The protein belongs to the universal ribosomal protein uL18 family. As to quaternary structure, part of the 50S ribosomal subunit; part of the 5S rRNA/L5/L18/L25 subcomplex. Contacts the 5S and 23S rRNAs.

In terms of biological role, this is one of the proteins that bind and probably mediate the attachment of the 5S RNA into the large ribosomal subunit, where it forms part of the central protuberance. The protein is Large ribosomal subunit protein uL18 of Roseobacter denitrificans (strain ATCC 33942 / OCh 114) (Erythrobacter sp. (strain OCh 114)).